Consider the following 97-residue polypeptide: UPF0213 protein YE0453 (97 aa).

Residues serine 4 to lysine 79 enclose the GIY-YIG domain.

It belongs to the UPF0213 family.

The polypeptide is UPF0213 protein YE0453 (Yersinia enterocolitica serotype O:8 / biotype 1B (strain NCTC 13174 / 8081)).